The sequence spans 369 residues: Flagellar P-ring protein (369 aa).

The N-terminal stretch at 1 to 22 (MFNARRLIAATLLMSCAFGAHA) is a signal peptide.

This sequence belongs to the FlgI family. As to quaternary structure, the basal body constitutes a major portion of the flagellar organelle and consists of four rings (L,P,S, and M) mounted on a central rod.

It localises to the periplasm. The protein resides in the bacterial flagellum basal body. In terms of biological role, assembles around the rod to form the L-ring and probably protects the motor/basal body from shearing forces during rotation. The protein is Flagellar P-ring protein of Pseudomonas entomophila (strain L48).